A 299-amino-acid chain; its full sequence is Protein N-terminal and lysine N-methyltransferase EFM7 (299 aa).

Residues Trp-74, Gly-100–Gly-102, Asp-122, Trp-155, and Ser-178 contribute to the S-adenosyl-L-methionine site.

This sequence belongs to the class I-like SAM-binding methyltransferase superfamily. EFM7 family.

It localises to the cytoplasm. Its function is as follows. S-adenosyl-L-methionine-dependent protein methyltransferase that trimethylates the N-terminal glycine 'Gly-2' of elongation factor 1-alpha, before also catalyzing the mono- and dimethylation of 'Lys-3'. The protein is Protein N-terminal and lysine N-methyltransferase EFM7 of Cryptococcus neoformans var. neoformans serotype D (strain B-3501A) (Filobasidiella neoformans).